Here is a 648-residue protein sequence, read N- to C-terminus: Proton myo-inositol cotransporter (648 aa).

At 1-76 the chain is on the cytoplasmic side; that stretch reads MSRKASENVE…AARRQFQQDE (76 aa). Phosphoserine occurs at positions 6, 47, and 50. Residues 77 to 97 traverse the membrane as a helical segment; sequence TPAFVYVVAVFSALGGFLFGY. At 98–125 the chain is on the extracellular side; it reads DTGVVSGAMLLLKRQLSLDALWQELLVS. A helical membrane pass occupies residues 126 to 146; sequence STVGAAAVSALAGGALNGVFG. The Cytoplasmic segment spans residues 147-148; that stretch reads RR. A helical transmembrane segment spans residues 149 to 169; sequence AAILLASALFTAGSAVLAAAN. Residues 170–178 are Extracellular-facing; sequence NKETLLAGR. A helical transmembrane segment spans residues 179-199; that stretch reads LVVGLGIGIASMTVPVYIAEV. At 200 to 212 the chain is on the cytoplasmic side; the sequence is SPPNLRGRLVTIN. Residues 213–233 traverse the membrane as a helical segment; it reads TLFITGGQFFASVVDGAFSYL. Over 234-239 the chain is Extracellular; sequence QKDGWR. A helical transmembrane segment spans residues 240 to 260; that stretch reads YMLGLAAVPAVIQFFGFLFLP. Over 261–324 the chain is Cytoplasmic; that stretch reads ESPRWLIQKG…RMLSYPPTRR (64 aa). The helical transmembrane segment at 325-345 threads the bilayer; sequence ALIVGCGLQMFQQLSGINTIM. At 346-363 the chain is on the extracellular side; sequence YYSATILQMSGVEDDRLA. The chain crosses the membrane as a helical span at residues 364 to 384; it reads IWLASVTAFTNFIFTLVGVWL. Over 385–393 the chain is Cytoplasmic; sequence VEKVGRRKL. The chain crosses the membrane as a helical span at residues 394 to 414; the sequence is TFGSLAGTTVALIILALGFVL. At 415–508 the chain is on the extracellular side; that stretch reads SAQVSPRITF…NFCPTPYSWT (94 aa). N433, N458, and N485 each carry an N-linked (GlcNAc...) asparagine glycan. Residues 509 to 529 form a helical membrane-spanning segment; the sequence is ALLGLILYLVFFAPGMGPMPW. Topologically, residues 530–549 are cytoplasmic; sequence TVNSEIYPLWARSTGNACSS. The helical transmembrane segment at 550–570 threads the bilayer; sequence GINWIFNVLVSLTFLHTAEYL. The Extracellular segment spans residues 571 to 573; that stretch reads TYY. A helical transmembrane segment spans residues 574–594; the sequence is GAFFLYAGFAAVGLLFIYGCL. Topologically, residues 595–648 are cytoplasmic; the sequence is PETKGKKLEEIESLFDNRLCTCGTSDSDEGRYIEYIRVKGSNYHLSDNDASDVE. A phosphoserine mark is found at S640 and S645.

It belongs to the major facilitator superfamily. Sugar transporter (TC 2.A.1.1) family. Glycosylated. As to expression, predominantly expressed in the brain.

Its subcellular location is the cell membrane. It catalyses the reaction myo-inositol(out) + H(+)(out) = myo-inositol(in) + H(+)(in). Functionally, h(+)-myo-inositol cotransporter. Can also transport related stereoisomers. This is Proton myo-inositol cotransporter from Homo sapiens (Human).